The chain runs to 278 residues: Envelope glycoprotein L (278 aa).

The N-terminal stretch at 1–30 (MCRRPDCGFSFSPGPVILLWCCLLLPIVSS) is a signal peptide. The region spanning 43–256 (VPAECPELTR…DKYYAGLPPE (214 aa)) is the gL betaherpesvirus-type domain. The cysteines at positions 154 and 159 are disulfide-linked.

The protein belongs to the herpesviridae glycoprotein L (gL) family. Betaherpesvirinae gL subfamily. Interacts with glycoprotein H (gH); this interaction is necessary for the correct processing and cell surface expression of gH. Forms the envelope pentamer complex (PC) composed of gH, gL, UL128, UL130, and UL131A. The pentamer interacts with host NRP2. Forms the envelope trimer complex composed of gH, gL, and gO. The trimer interacts with host PDGFRA. The trimer also interacts with host EPHA2.

Its subcellular location is the virion membrane. It is found in the host cell membrane. The protein localises to the host Golgi apparatus. The protein resides in the host trans-Golgi network. In terms of biological role, the heterodimer glycoprotein H-glycoprotein L is required for the fusion of viral and plasma membranes leading to virus entry into the host cell. Acts as a functional inhibitor of gH and maintains gH in an inhibited form. Upon binding to host integrins, gL dissociates from gH leading to activation of the viral fusion glycoproteins gB and gH. In human cytomegalovirus, forms two distincts complexes to mediate viral entry, a trimer and a pentamer at the surface of the virion envelope. The gH-gL-gO trimer is required for infection in fibroblasts by interacting with host PDGFRA, and in glioblastoma cells by interacting with host EPHA2. The gH-gL-UL128-UL130-UL131A pentamer is essential for viral entry in epithelial, endothelial and myeloid cells via interaction with host NRP2. In Homo sapiens (Human), this protein is Envelope glycoprotein L.